A 154-amino-acid polypeptide reads, in one-letter code: 6,7-dimethyl-8-ribityllumazine synthase (154 aa).

5-amino-6-(D-ribitylamino)uracil-binding positions include tryptophan 22, 56–58 (AWE), and 80–82 (CVV). Residue 85–86 (DT) coordinates (2S)-2-hydroxy-3-oxobutyl phosphate. Residue histidine 88 is the Proton donor of the active site. Asparagine 113 contacts 5-amino-6-(D-ribitylamino)uracil. Arginine 127 serves as a coordination point for (2S)-2-hydroxy-3-oxobutyl phosphate.

This sequence belongs to the DMRL synthase family. In terms of assembly, forms an icosahedral capsid composed of 60 subunits, arranged as a dodecamer of pentamers.

The enzyme catalyses (2S)-2-hydroxy-3-oxobutyl phosphate + 5-amino-6-(D-ribitylamino)uracil = 6,7-dimethyl-8-(1-D-ribityl)lumazine + phosphate + 2 H2O + H(+). It participates in cofactor biosynthesis; riboflavin biosynthesis; riboflavin from 2-hydroxy-3-oxobutyl phosphate and 5-amino-6-(D-ribitylamino)uracil: step 1/2. Its function is as follows. Catalyzes the formation of 6,7-dimethyl-8-ribityllumazine by condensation of 5-amino-6-(D-ribitylamino)uracil with 3,4-dihydroxy-2-butanone 4-phosphate. This is the penultimate step in the biosynthesis of riboflavin. This chain is 6,7-dimethyl-8-ribityllumazine synthase, found in Xylella fastidiosa (strain 9a5c).